Here is a 253-residue protein sequence, read N- to C-terminus: MRILLSNDDGYLAPGLAALYEALRPLAEILVMAPEQNCSGASNSLTLSRPLSVSRSAATGFYYVNGTPTDSVHVALTGMLDTKPDLVVSGINNGQNMGDDTLYSGTVAAATEGIMFGVPAIAFSLVHKEWAHLGDAARVAAEIVRHYLDHPLPGQPLLNVNIPNLPYEELKGWRVTRLGKRHPSQPVIRQTNPRGEPIYWIGAAGDALDASEGTDFHATASGYVSITPLQLDLTHTQMLAATRDWARAGSGAS.

4 residues coordinate a divalent metal cation: aspartate 8, aspartate 9, serine 39, and asparagine 92.

The protein belongs to the SurE nucleotidase family. A divalent metal cation is required as a cofactor.

Its subcellular location is the cytoplasm. It catalyses the reaction a ribonucleoside 5'-phosphate + H2O = a ribonucleoside + phosphate. Functionally, nucleotidase that shows phosphatase activity on nucleoside 5'-monophosphates. In Burkholderia pseudomallei (strain 668), this protein is 5'-nucleotidase SurE.